Reading from the N-terminus, the 111-residue chain is Large ribosomal subunit protein uL24 (111 aa).

It belongs to the universal ribosomal protein uL24 family. As to quaternary structure, part of the 50S ribosomal subunit.

One of two assembly initiator proteins, it binds directly to the 5'-end of the 23S rRNA, where it nucleates assembly of the 50S subunit. Functionally, one of the proteins that surrounds the polypeptide exit tunnel on the outside of the subunit. This Bifidobacterium animalis subsp. lactis (strain AD011) protein is Large ribosomal subunit protein uL24.